A 455-amino-acid polypeptide reads, in one-letter code: 1-deoxy-D-xylulose 5-phosphate reductoisomerase (455 aa).

The NADPH site is built by Thr-30, Gly-31, Ser-32, Ile-33, Gln-63, and Asn-159. Lys-160 lines the 1-deoxy-D-xylulose 5-phosphate pocket. Glu-161 contributes to the NADPH binding site. Residue Asp-185 coordinates Mn(2+). Ser-186 and Glu-187 together coordinate 1-deoxy-D-xylulose 5-phosphate. Glu-187 is a binding site for Mn(2+). Over residues 205–214 (YATAKQSIQP) the composition is skewed to polar residues. The segment at 205–233 (YATAKQSIQPESVRATDPPSSTTDSPAKT) is disordered. 1-deoxy-D-xylulose 5-phosphate contacts are provided by Ser-246 and His-269. Gly-275 lines the NADPH pocket. 1-deoxy-D-xylulose 5-phosphate-binding residues include Ser-282, Asn-287, Lys-288, and Glu-291. Glu-291 serves as a coordination point for Mn(2+).

The protein belongs to the DXR family. Requires Mg(2+) as cofactor. The cofactor is Mn(2+).

It carries out the reaction 2-C-methyl-D-erythritol 4-phosphate + NADP(+) = 1-deoxy-D-xylulose 5-phosphate + NADPH + H(+). Its pathway is isoprenoid biosynthesis; isopentenyl diphosphate biosynthesis via DXP pathway; isopentenyl diphosphate from 1-deoxy-D-xylulose 5-phosphate: step 1/6. Functionally, catalyzes the NADPH-dependent rearrangement and reduction of 1-deoxy-D-xylulose-5-phosphate (DXP) to 2-C-methyl-D-erythritol 4-phosphate (MEP). The sequence is that of 1-deoxy-D-xylulose 5-phosphate reductoisomerase from Rhodopirellula baltica (strain DSM 10527 / NCIMB 13988 / SH1).